A 202-amino-acid chain; its full sequence is Adenylyl-sulfate kinase (202 aa).

31-38 (GLSASGKS) lines the ATP pocket. S105 (phosphoserine intermediate) is an active-site residue.

The protein belongs to the APS kinase family.

The enzyme catalyses adenosine 5'-phosphosulfate + ATP = 3'-phosphoadenylyl sulfate + ADP + H(+). Its pathway is sulfur metabolism; hydrogen sulfide biosynthesis; sulfite from sulfate: step 2/3. Catalyzes the synthesis of activated sulfate. The sequence is that of Adenylyl-sulfate kinase (MET14) from Saccharomyces bayanus (Yeast).